A 1429-amino-acid chain; its full sequence is Gag-Pol polyprotein (1429 aa).

A lipid anchor (N-myristoyl glycine; by host) is attached at glycine 2. Residues 7-31 (VLSGGKLDKWEKIQLRPGGKKKYRL) are interaction with Gp41. Positions 8–43 (LSGGKLDKWEKIQLRPGGKKKYRLKHLVWASRELER) are interaction with host CALM1. Positions 12–19 (KLDKWEKI) are interaction with host AP3D1. An interaction with membrane phosphatidylinositol 4,5-bisphosphate and RNA region spans residues 14-33 (DKWEKIQLRPGGKKKYRLKH). The Nuclear export signal motif lies at 16–22 (WEKIQLR). Positions 26–32 (KKKYRLK) match the Nuclear localization signal motif. The segment at 73 to 77 (EELRS) is interaction with membrane phosphatidylinositol 4,5-bisphosphate. A disordered region spans residues 105 to 124 (EEEQNRTQQKTQQGKADKGV). Residues 110–124 (RTQQKTQQGKADKGV) show a composition bias toward polar residues. Tyrosine 128 is modified (phosphotyrosine; by host). The segment at 185-223 (NTVGGHQAAMQMLKDTINEEAAEWDRMHPVQAGPIPPGQ) is interaction with human PPIA/CYPA and NUP153. A dimerization/Multimerization of capsid protein p24 region spans residues 273–359 (YSPVSILDIR…GGPGHKARVL (87 aa)). 2 CCHC-type zinc fingers span residues 385 to 402 (IKCFNCGKEGHLARNCRA) and 406 to 423 (KGCWKCGKEGHQMKDCSE). Residues 439-479 (EARKFSSEQTRANSPTSRELWVRGEDNPLSETGNERSGTGS) form a disordered region. Composition is skewed to polar residues over residues 445–455 (SEQTRANSPTS) and 467–479 (LSETGNERSGTGS). The tract at residues 484–488 (PQITL) is dimerization of protease. Residues 503–572 (REALLDTGAD…TPVNIIGRNM (70 aa)) enclose the Peptidase A2 domain. The active-site For protease activity; shared with dimeric partner is the aspartate 508. Dimerization of protease regions lie at residues 532–538 (GIGGFIK) and 571–583 (NMLTQIGCTLNFP). Residues 626–816 (EGKISKIGPE…PPFLWMGYEL (191 aa)) form the Reverse transcriptase domain. The Mg(2+) site is built by aspartate 692, aspartate 767, and aspartate 768. The tract at residues 809–817 (FLWMGYELH) is RT 'primer grip'. The Tryptophan repeat motif signature appears at 980–996 (WGTWWTEYWQATWIPEW). An RNase H type-1 domain is found at 1016–1139 (IVGAETFYVD…VDKLVSSGIR (124 aa)). Mg(2+)-binding residues include aspartate 1025, glutamate 1060, aspartate 1080, and aspartate 1131. The segment at 1145–1186 (DGIDKAQEEHEKYHNNWRAMASDFNLPPVVAKEIVASCDKCQ) adopts an Integrase-type zinc-finger fold. 4 residues coordinate Zn(2+): histidine 1154, histidine 1158, cysteine 1182, and cysteine 1185. The 151-residue stretch at 1196-1346 (VDCSPGIWQL…SAGERIIDII (151 aa)) folds into the Integrase catalytic domain. 3 residues coordinate Mg(2+): aspartate 1206, aspartate 1258, and glutamate 1294. The segment at residues 1365–1411 (FRVYYRDSREPIWKGPAKLLWKGEGAVVIQNSEIKVVPRRKAKIIRD) is a DNA-binding region (integrase-type).

Homotrimer; further assembles as hexamers of trimers. Interacts with gp41 (via C-terminus). Interacts with host CALM1; this interaction induces a conformational change in the Matrix protein, triggering exposure of the myristate group. Interacts with host AP3D1; this interaction allows the polyprotein trafficking to multivesicular bodies during virus assembly. Part of the pre-integration complex (PIC) which is composed of viral genome, matrix protein, Vpr and integrase. In terms of assembly, homodimer; the homodimer further multimerizes as homohexamers or homopentamers. Interacts with human PPIA/CYPA; This interaction stabilizes the capsid. Interacts with human NUP153. Interacts with host PDZD8; this interaction stabilizes the capsid. Interacts with monkey TRIM5; this interaction destabilizes the capsid. As to quaternary structure, homodimer, whose active site consists of two apposed aspartic acid residues. Heterodimer of p66 RT and p51 RT (RT p66/p51). Heterodimerization of RT is essential for DNA polymerase activity. The overall folding of the subdomains is similar in p66 RT and p51 RT but the spatial arrangements of the subdomains are dramatically different. In terms of assembly, homotetramer; may further associate as a homohexadecamer. Part of the pre-integration complex (PIC) which is composed of viral genome, matrix protein, Vpr and integrase. Interacts with human SMARCB1/INI1 and human PSIP1/LEDGF isoform 1. Interacts with human KPNA3; this interaction might play a role in nuclear import of the pre-integration complex. Interacts with human NUP153; this interaction might play a role in nuclear import of the pre-integration complex. The cofactor is Mg(2+). Post-translationally, specific enzymatic cleavages by the viral protease yield mature proteins. The protease is released by autocatalytic cleavage. The polyprotein is cleaved during and after budding, this process is termed maturation. Proteolytic cleavage of p66 RT removes the RNase H domain to yield the p51 RT subunit. Nucleocapsid protein p7 might be further cleaved after virus entry. In terms of processing, tyrosine phosphorylated presumably in the virion by a host kinase. Phosphorylation is apparently not a major regulator of membrane association. Phosphorylated possibly by host MAPK1; this phosphorylation is necessary for Pin1-mediated virion uncoating. Post-translationally, methylated by host PRMT6, impairing its function by reducing RNA annealing and the initiation of reverse transcription.

The protein localises to the host cell membrane. Its subcellular location is the host endosome. It localises to the host multivesicular body. The protein resides in the virion membrane. It is found in the host nucleus. The protein localises to the host cytoplasm. Its subcellular location is the virion. It catalyses the reaction Specific for a P1 residue that is hydrophobic, and P1' variable, but often Pro.. The enzyme catalyses Endohydrolysis of RNA in RNA/DNA hybrids. Three different cleavage modes: 1. sequence-specific internal cleavage of RNA. Human immunodeficiency virus type 1 and Moloney murine leukemia virus enzymes prefer to cleave the RNA strand one nucleotide away from the RNA-DNA junction. 2. RNA 5'-end directed cleavage 13-19 nucleotides from the RNA end. 3. DNA 3'-end directed cleavage 15-20 nucleotides away from the primer terminus.. It carries out the reaction 3'-end directed exonucleolytic cleavage of viral RNA-DNA hybrid.. The catalysed reaction is DNA(n) + a 2'-deoxyribonucleoside 5'-triphosphate = DNA(n+1) + diphosphate. With respect to regulation, protease: The viral protease is inhibited by many synthetic protease inhibitors (PIs), such as amprenavir, atazanavir, indinavir, loprinavir, nelfinavir, ritonavir and saquinavir. Use of protease inhibitors in tritherapy regimens permit more ambitious therapeutic strategies. Reverse transcriptase/ribonuclease H: RT can be inhibited either by nucleoside RT inhibitors (NRTIs) or by non nucleoside RT inhibitors (NNRTIs). NRTIs act as chain terminators, whereas NNRTIs inhibit DNA polymerization by binding a small hydrophobic pocket near the RT active site and inducing an allosteric change in this region. Classical NRTIs are abacavir, adefovir (PMEA), didanosine (ddI), lamivudine (3TC), stavudine (d4T), tenofovir (PMPA), zalcitabine (ddC), and zidovudine (AZT). Classical NNRTIs are atevirdine (BHAP U-87201E), delavirdine, efavirenz (DMP-266), emivirine (I-EBU), and nevirapine (BI-RG-587). The tritherapies used as a basic effective treatment of AIDS associate two NRTIs and one NNRTI. In terms of biological role, mediates, with Gag polyprotein, the essential events in virion assembly, including binding the plasma membrane, making the protein-protein interactions necessary to create spherical particles, recruiting the viral Env proteins, and packaging the genomic RNA via direct interactions with the RNA packaging sequence (Psi). Gag-Pol polyprotein may regulate its own translation, by the binding genomic RNA in the 5'-UTR. At low concentration, the polyprotein would promote translation, whereas at high concentration, the polyprotein would encapsidate genomic RNA and then shut off translation. Its function is as follows. Targets the polyprotein to the plasma membrane via a multipartite membrane-binding signal, that includes its myristoylated N-terminus. Matrix protein is part of the pre-integration complex. Implicated in the release from host cell mediated by Vpu. Binds to RNA. Forms the conical core that encapsulates the genomic RNA-nucleocapsid complex in the virion. Most core are conical, with only 7% tubular. The core is constituted by capsid protein hexamer subunits. The core is disassembled soon after virion entry. Host restriction factors such as TRIM5-alpha or TRIMCyp bind retroviral capsids and cause premature capsid disassembly, leading to blocks in reverse transcription. Capsid restriction by TRIM5 is one of the factors which restricts HIV-1 to the human species. Host PIN1 apparently facilitates the virion uncoating. On the other hand, interactions with PDZD8 or CYPA stabilize the capsid. Functionally, encapsulates and protects viral dimeric unspliced genomic RNA (gRNA). Binds these RNAs through its zinc fingers. Acts as a nucleic acid chaperone which is involved in rearangement of nucleic acid secondary structure during gRNA retrotranscription. Also facilitates template switch leading to recombination. As part of the polyprotein, participates in gRNA dimerization, packaging, tRNA incorporation and virion assembly. In terms of biological role, aspartyl protease that mediates proteolytic cleavages of Gag and Gag-Pol polyproteins during or shortly after the release of the virion from the plasma membrane. Cleavages take place as an ordered, step-wise cascade to yield mature proteins. This process is called maturation. Displays maximal activity during the budding process just prior to particle release from the cell. Also cleaves Nef and Vif, probably concomitantly with viral structural proteins on maturation of virus particles. Hydrolyzes host EIF4GI and PABP1 in order to shut off the capped cellular mRNA translation. The resulting inhibition of cellular protein synthesis serves to ensure maximal viral gene expression and to evade host immune response. Also mediates cleavage of host YTHDF3. Mediates cleavage of host CARD8, thereby activating the CARD8 inflammasome, leading to the clearance of latent HIV-1 in patient CD4(+) T-cells after viral reactivation; in contrast, HIV-1 can evade CARD8-sensing when its protease remains inactive in infected cells prior to viral budding. Its function is as follows. Multifunctional enzyme that converts the viral RNA genome into dsDNA in the cytoplasm, shortly after virus entry into the cell. This enzyme displays a DNA polymerase activity that can copy either DNA or RNA templates, and a ribonuclease H (RNase H) activity that cleaves the RNA strand of RNA-DNA heteroduplexes in a partially processive 3' to 5' endonucleasic mode. Conversion of viral genomic RNA into dsDNA requires many steps. A tRNA(3)-Lys binds to the primer-binding site (PBS) situated at the 5'-end of the viral RNA. RT uses the 3' end of the tRNA primer to perform a short round of RNA-dependent minus-strand DNA synthesis. The reading proceeds through the U5 region and ends after the repeated (R) region which is present at both ends of viral RNA. The portion of the RNA-DNA heteroduplex is digested by the RNase H, resulting in a ssDNA product attached to the tRNA primer. This ssDNA/tRNA hybridizes with the identical R region situated at the 3' end of viral RNA. This template exchange, known as minus-strand DNA strong stop transfer, can be either intra- or intermolecular. RT uses the 3' end of this newly synthesized short ssDNA to perform the RNA-dependent minus-strand DNA synthesis of the whole template. RNase H digests the RNA template except for two polypurine tracts (PPTs) situated at the 5'-end and near the center of the genome. It is not clear if both polymerase and RNase H activities are simultaneous. RNase H probably can proceed both in a polymerase-dependent (RNA cut into small fragments by the same RT performing DNA synthesis) and a polymerase-independent mode (cleavage of remaining RNA fragments by free RTs). Secondly, RT performs DNA-directed plus-strand DNA synthesis using the PPTs that have not been removed by RNase H as primers. PPTs and tRNA primers are then removed by RNase H. The 3' and 5' ssDNA PBS regions hybridize to form a circular dsDNA intermediate. Strand displacement synthesis by RT to the PBS and PPT ends produces a blunt ended, linear dsDNA copy of the viral genome that includes long terminal repeats (LTRs) at both ends. Catalyzes viral DNA integration into the host chromosome, by performing a series of DNA cutting and joining reactions. This enzyme activity takes place after virion entry into a cell and reverse transcription of the RNA genome in dsDNA. The first step in the integration process is 3' processing. This step requires a complex comprising the viral genome, matrix protein, Vpr and integrase. This complex is called the pre-integration complex (PIC). The integrase protein removes 2 nucleotides from each 3' end of the viral DNA, leaving recessed CA OH's at the 3' ends. In the second step, the PIC enters cell nucleus. This process is mediated through integrase and Vpr proteins, and allows the virus to infect a non dividing cell. This ability to enter the nucleus is specific of lentiviruses, other retroviruses cannot and rely on cell division to access cell chromosomes. In the third step, termed strand transfer, the integrase protein joins the previously processed 3' ends to the 5' ends of strands of target cellular DNA at the site of integration. The 5'-ends are produced by integrase-catalyzed staggered cuts, 5 bp apart. A Y-shaped, gapped, recombination intermediate results, with the 5'-ends of the viral DNA strands and the 3' ends of target DNA strands remaining unjoined, flanking a gap of 5 bp. The last step is viral DNA integration into host chromosome. This involves host DNA repair synthesis in which the 5 bp gaps between the unjoined strands are filled in and then ligated. Since this process occurs at both cuts flanking the HIV genome, a 5 bp duplication of host DNA is produced at the ends of HIV-1 integration. Alternatively, Integrase may catalyze the excision of viral DNA just after strand transfer, this is termed disintegration. The protein is Gag-Pol polyprotein (gag-pol) of Homo sapiens (Human).